The chain runs to 86 residues: Cytochrome c-555 (86 aa).

4 residues coordinate heme c: Cys14, Cys17, His18, and Met60.

In terms of processing, binds 1 heme c group covalently per subunit.

Its function is as follows. This basic c-type monoheme cytochrome has been found exclusively in the green photosynthetic bacteria, although its role in bacterial photosynthesis is not established. It has an unusually low redox potential compared with mitochondrial cytochrome c. It is reactive with cytochrome c oxidases but not with reductases. The polypeptide is Cytochrome c-555 (Chlorobaculum thiosulfatiphilum (Chlorobium limicola f.sp. thiosulfatophilum)).